A 164-amino-acid chain; its full sequence is CB1 cannabinoid receptor-interacting protein 1 (164 aa).

This sequence belongs to the CNRIP family. Interacts with the cannabinoid receptor CNR1 (via C-terminus). Does not interact with cannabinoid receptor CNR2.

Suppresses cannabinoid receptor CNR1-mediated tonic inhibition of voltage-gated calcium channels. In Rattus norvegicus (Rat), this protein is CB1 cannabinoid receptor-interacting protein 1 (Cnrip1).